The following is a 275-amino-acid chain: Collectin-10 (275 aa).

Residues 1–25 (MKYGKLWPIGVSVLGVIALHVRVLS) form the signal peptide. Asn-30 is a glycosylation site (N-linked (GlcNAc...) asparagine). The disordered stretch occupies residues 39–76 (THTILPGPKGDDGEAGDTGVLGKLGKDGPKGQKGNKGI). A Collagen-like domain is found at 51 to 110 (GEAGDTGVLGKLGKDGPKGQKGNKGIIGDSGDLGLIGKIGPIGSKGDKGHKGLPGLPGGK). Positions 153–269 (TDEKYYYIVR…CSLTIYFVCE (117 aa)) constitute a C-type lectin domain. Intrachain disulfides connect Cys-174–Cys-268 and Cys-246–Cys-260.

It belongs to the COLEC10/COLEC11 family.

The protein localises to the secreted. In terms of biological role, lectin that binds to various sugars: galactose &gt; mannose = fucose &gt; N-acetylglucosamine &gt; N-acetylgalactosamine. The sequence is that of Collectin-10 (colec10) from Xenopus tropicalis (Western clawed frog).